A 133-amino-acid polypeptide reads, in one-letter code: Small ribosomal subunit protein uS12 (133 aa).

The residue at position 89 (D89) is a 3-methylthioaspartic acid. Residues 103 to 133 (DTAGVAGRTQRRSKYGAKRPKPGQAAPAKKK) are disordered. Residues 111-123 (TQRRSKYGAKRPK) are compositionally biased toward basic residues. A compositionally biased stretch (low complexity) spans 124–133 (PGQAAPAKKK).

The protein belongs to the universal ribosomal protein uS12 family. As to quaternary structure, part of the 30S ribosomal subunit. Contacts proteins S8 and S17. May interact with IF1 in the 30S initiation complex.

Functionally, with S4 and S5 plays an important role in translational accuracy. Interacts with and stabilizes bases of the 16S rRNA that are involved in tRNA selection in the A site and with the mRNA backbone. Located at the interface of the 30S and 50S subunits, it traverses the body of the 30S subunit contacting proteins on the other side and probably holding the rRNA structure together. The combined cluster of proteins S8, S12 and S17 appears to hold together the shoulder and platform of the 30S subunit. The sequence is that of Small ribosomal subunit protein uS12 from Bacteroides thetaiotaomicron (strain ATCC 29148 / DSM 2079 / JCM 5827 / CCUG 10774 / NCTC 10582 / VPI-5482 / E50).